A 257-amino-acid chain; its full sequence is 3-alpha-hydroxysteroid dehydrogenase/carbonyl reductase (257 aa).

Residues 8–13, Asp32, 41–42, and Gly71 contribute to the NAD(+) site; these read GCATGI and DL. Ser114 is a substrate binding site. NAD(+) contacts are provided by Tyr155 and Lys159. The active-site Proton acceptor is the Tyr155.

Belongs to the short-chain dehydrogenases/reductases (SDR) family. As to quaternary structure, homodimer.

It localises to the cytoplasm. The catalysed reaction is a 3alpha-hydroxysteroid + NADP(+) = a 3-oxosteroid + NADPH + H(+). The enzyme catalyses a 3alpha-hydroxysteroid + NAD(+) = a 3-oxosteroid + NADH + H(+). Catalyzes the reversible interconversion of hydroxy and oxo groups at position 3 of the steroid nucleus. Along with the 3 alpha-hydroxysteroid dehydrogenase and 3-oxo-reductase activities towards a variety of cis or trans fused A/B ring steroids, it also reduces several xenobiotic carbonyl compounds, including a metyrapone-based class of insecticides, to the respective alcohol metabolites. No detectable activity on testosterone, progesterone or 3-oxo-desogestrel. This is 3-alpha-hydroxysteroid dehydrogenase/carbonyl reductase (hsdA) from Comamonas testosteroni (Pseudomonas testosteroni).